A 939-amino-acid chain; its full sequence is UvrABC system protein A (939 aa).

32–39 (GLSGSGKS) is an ATP binding site. The C4-type zinc finger occupies 252–279 (CADCGISIDELAPRMFSFNSPFGKCERC). 2 consecutive ABC transporter domains span residues 309–588 (WGDS…ENSL) and 608–936 (GNGN…KYLK). ATP is bound at residue 640-647 (GVSGSGKS). The segment at 739–765 (CEACSGDGIIKIEMQFLSDVYVPCEVC) adopts a C4-type zinc-finger fold.

It belongs to the ABC transporter superfamily. UvrA family. As to quaternary structure, forms a heterotetramer with UvrB during the search for lesions.

Its subcellular location is the cytoplasm. The UvrABC repair system catalyzes the recognition and processing of DNA lesions. UvrA is an ATPase and a DNA-binding protein. A damage recognition complex composed of 2 UvrA and 2 UvrB subunits scans DNA for abnormalities. When the presence of a lesion has been verified by UvrB, the UvrA molecules dissociate. The polypeptide is UvrABC system protein A (Clostridium perfringens (strain 13 / Type A)).